The sequence spans 299 residues: Homeobox protein Nkx-2.5 (299 aa).

The segment covering 90–119 (KDPKDHKKDICPLQKTLEHDKREAEDPERP) has biased composition (basic and acidic residues). Positions 90–128 (KDPKDHKKDICPLQKTLEHDKREAEDPERPRQRKRRKPR) are disordered. Positions 124 to 183 (RRKPRVLFSQAQVYELERRFKQQKYLSAPERDHLANVLKLTSTQVKIWFQNRRYKCKRQR) form a DNA-binding region, homeobox.

It belongs to the NK-2 homeobox family. Homodimer (via the homeobox); binds DNA as homodimer. Heart and gut tissue.

The protein resides in the nucleus. In terms of biological role, transcription factor required for the development of the heart and the spleen. Implicated in commitment to and/or differentiation of the myocardial lineage. May regulate the expression of genes involved in cardiogenesis and play a role in the formation of gut and the pharyngeal region. Binds to the core DNA motif of promoter. This Xenopus laevis (African clawed frog) protein is Homeobox protein Nkx-2.5 (nkx-2.5).